We begin with the raw amino-acid sequence, 338 residues long: Ankyrin-repeat domain containing transcription coregulator asaA (338 aa).

Over residues 1 to 10 (MGAPHEEIQA) the composition is skewed to basic and acidic residues. Disordered stretches follow at residues 1-70 (MGAP…LRST) and 112-137 (ASSV…PFID). The span at 11-33 (LKRRREQNRLAQRRRRDNVRRRL) shows a compositional bias: basic residues. A compositionally biased stretch (polar residues) spans 42-70 (SPASASQTSLCSSTDSRVTLNPHQSLRST). The span at 112-130 (ASSVSPSSSAGPLSSSPSP) shows a compositional bias: low complexity. ANK repeat units lie at residues 235 to 264 (RWTT…DPNA), 268 to 297 (EGAT…DPTL), and 301 to 330 (AGWL…PVDY).

It participates in secondary metabolite biosynthesis. Its function is as follows. Transcription coregulator involved in regulation of gene cluster that mediates the biosynthesis of aspergillic acid, a hydroxamic acid-containing pyrazinone with aliphatic side chains that originates from leucine (Leu) and isoleucine (Ile). Aspergillic acid has antibiotic properties and was shown to be lethal to mice. The chain is Ankyrin-repeat domain containing transcription coregulator asaA from Aspergillus flavus (strain ATCC 200026 / FGSC A1120 / IAM 13836 / NRRL 3357 / JCM 12722 / SRRC 167).